The primary structure comprises 236 residues: Lipid A 4'-phosphatase (236 aa).

5 helical membrane passes run 26 to 46, 58 to 78, 134 to 153, 160 to 182, and 200 to 220; these read FFYLISAKWTWVIMSIAFLFF, FIVGAVLLSVLICDQLSSSFF, YTWTIWSVVALVIYSRIYIG, IIPGIAVGLIVGHFVYKVYLYAR, and GDSIRLWTLSLIGFVFAMLCM.

The protein belongs to the lipid A LpxF 4'-phosphatase family.

Its subcellular location is the cell inner membrane. Its pathway is bacterial outer membrane biogenesis; LPS lipid A biosynthesis. Removes the 4'-phosphate group from lipid A species. Absence of phosphate groups in lipid A renders the bacteria resistant to host-derived cationic antimicrobial peptides (CAMP) and allows it to camouflage itself from the host innate immune response. Removal of the 4'-phosphate may be required to generate the substrate for deacylation of the pentaacyl lipid A to the tetraccylated lipid A species. The sequence is that of Lipid A 4'-phosphatase from Porphyromonas gingivalis (strain ATCC 33277 / DSM 20709 / CIP 103683 / JCM 12257 / NCTC 11834 / 2561).